We begin with the raw amino-acid sequence, 94 residues long: Neutrophil defensin 6 (94 aa).

A signal peptide spans methionine 1–alanine 19. A propeptide spanning residues lysine 20 to alanine 61 is cleaved from the precursor. 3 cysteine pairs are disulfide-bonded: cysteine 65–cysteine 93, cysteine 67–cysteine 82, and cysteine 72–cysteine 92.

The protein belongs to the alpha-defensin family.

The protein localises to the secreted. Functionally, defensins 6 and 7 have bacteriostatic activity against Gram-positive bacteria S.aureus and L.monocytogenes and Gram-negative bacterium E.coli and antifungal activity against C.neoformans. Defensin 7 has microbicidial activity against Gram-positive bacteria S.aureus and L.monocytogenes. The chain is Neutrophil defensin 6 from Macaca mulatta (Rhesus macaque).